The chain runs to 253 residues: Probable proteasome subunit alpha type-7 (253 aa).

Position 104 is a phosphoserine (Ser-104).

The protein belongs to the peptidase T1A family. As to quaternary structure, the 26S proteasome consists of a 20S proteasome core and two 19S regulatory subunits. The 20S proteasome core is composed of 28 subunits that are arranged in four stacked rings, resulting in a barrel-shaped structure. The two end rings are each formed by seven alpha subunits, and the two central rings are each formed by seven beta subunits. The catalytic chamber with the active sites is on the inside of the barrel.

It localises to the cytoplasm. The protein localises to the nucleus. In terms of biological role, the proteasome is a multicatalytic proteinase complex which is characterized by its ability to cleave peptides with Arg, Phe, Tyr, Leu, and Glu adjacent to the leaving group at neutral or slightly basic pH. The proteasome has an ATP-dependent proteolytic activity. This Schizosaccharomyces pombe (strain 972 / ATCC 24843) (Fission yeast) protein is Probable proteasome subunit alpha type-7 (pre10).